We begin with the raw amino-acid sequence, 306 residues long: SPbeta prophage-derived uncharacterized protein YonG (306 aa).

This chain is SPbeta prophage-derived uncharacterized protein YonG (yonG), found in Bacillus subtilis (strain 168).